Consider the following 183-residue polypeptide: Alkyl hydroperoxide reductase AhpD (183 aa).

The active-site Proton donor is the Cys-132. An intrachain disulfide couples Cys-132 to Cys-135. The Cysteine sulfenic acid (-SOH) intermediate role is filled by Cys-135.

The protein belongs to the AhpD family.

The enzyme catalyses N(6)-[(R)-dihydrolipoyl]-L-lysyl-[lipoyl-carrier protein] + a hydroperoxide = N(6)-[(R)-lipoyl]-L-lysyl-[lipoyl-carrier protein] + an alcohol + H2O. In terms of biological role, antioxidant protein with alkyl hydroperoxidase activity. Required for the reduction of the AhpC active site cysteine residues and for the regeneration of the AhpC enzyme activity. This Caulobacter vibrioides (strain ATCC 19089 / CIP 103742 / CB 15) (Caulobacter crescentus) protein is Alkyl hydroperoxide reductase AhpD.